Reading from the N-terminus, the 751-residue chain is Photosystem I P700 chlorophyll a apoprotein A1 (751 aa).

Helical transmembrane passes span 73–96 (VFSA…FHGA), 159–182 (LYAT…FHYH), 198–222 (MNHH…HISL), 294–312 (EAHH…GHQY), 349–372 (WHAQ…HHMY), 388–414 (LSLF…IFMV), 436–458 (AIIS…LYIH), and 533–551 (FLVH…LILL). Residues C575 and C584 each coordinate [4Fe-4S] cluster. 2 helical membrane passes run 591–612 (HVFL…HFSW) and 665–687 (LSAY…MFLF). A chlorophyll a'-binding site is contributed by H676. M684 and Y692 together coordinate chlorophyll a. W693 serves as a coordination point for phylloquinone. The chain crosses the membrane as a helical span at residues 725–745 (AVGVAHYLLGGIATTWSFFLA).

The protein belongs to the PsaA/PsaB family. As to quaternary structure, the PsaA/B heterodimer binds the P700 chlorophyll special pair and subsequent electron acceptors. PSI consists of a core antenna complex that captures photons, and an electron transfer chain that converts photonic excitation into a charge separation. The eukaryotic PSI reaction center is composed of at least 11 subunits. Requires P700 is a chlorophyll a/chlorophyll a' dimer, A0 is one or more chlorophyll a, A1 is one or both phylloquinones and FX is a shared 4Fe-4S iron-sulfur center. as cofactor.

It localises to the plastid. It is found in the chloroplast thylakoid membrane. The enzyme catalyses reduced [plastocyanin] + hnu + oxidized [2Fe-2S]-[ferredoxin] = oxidized [plastocyanin] + reduced [2Fe-2S]-[ferredoxin]. In terms of biological role, psaA and PsaB bind P700, the primary electron donor of photosystem I (PSI), as well as the electron acceptors A0, A1 and FX. PSI is a plastocyanin/cytochrome c6-ferredoxin oxidoreductase, converting photonic excitation into a charge separation, which transfers an electron from the donor P700 chlorophyll pair to the spectroscopically characterized acceptors A0, A1, FX, FA and FB in turn. Oxidized P700 is reduced on the lumenal side of the thylakoid membrane by plastocyanin or cytochrome c6. This is Photosystem I P700 chlorophyll a apoprotein A1 from Oltmannsiellopsis viridis (Marine flagellate).